We begin with the raw amino-acid sequence, 328 residues long: Glucokinase (328 aa).

16–21 (ADIGGT) contributes to the ATP binding site.

This sequence belongs to the bacterial glucokinase family.

It is found in the cytoplasm. The catalysed reaction is D-glucose + ATP = D-glucose 6-phosphate + ADP + H(+). The chain is Glucokinase from Neisseria meningitidis serogroup C (strain 053442).